The following is a 534-amino-acid chain: MEANVGFLTLCLAITLVRFLMKRYWHQSKINDKNNKAIKQHYPLPPTPKGLRPWPIVGNLPEMLMNKPTFRWIHKLMEESNTQIACIRLANVHVTPVSCPILSREILKKQDATFATRPLSISTFLITKGYITTVMVPFGEQWKKMRKVITSELLSPMRHKWLTDKRIEEADHLVRYVFNQCNNDEGSGIVDLRLATQHYCANVIKRMIFNQRYFTEEMKDGGPSVEEQNYVNAVFDMLRYIYAFSASDYISCLRGLDLDGHEKIIKDCIKLTRKRQDPVIEERIREHQKLGGNKVPVDLLDILISLKDASGQPLLSTDEIKGQVNEMIMAAVDNPSNAAEWAIAEMINQPHLFEKARQELDAVVGKERQVQESDLSQLNFVKACAREAFRLHPVAPFNVPHVSMADTTVGDYFIPKGSHVMLSRIGLGRNPKIWDEPLKYKPERHLKDDGSGVVLTESELRFISFSTGMRGCVASTLGTSMTVMLFARLLHGFTWEAPPNESRIDLTEADGELLLAKPLFALAKPRLPAHVYQT.

Residues 1–21 (MEANVGFLTLCLAITLVRFLM) form the signal peptide. C472 contacts heme. N-linked (GlcNAc...) asparagine glycosylation occurs at N500.

Belongs to the cytochrome P450 family. Heme serves as cofactor. As to expression, expressed in seedlings.

It carries out the reaction L-phenylalanine + 2 reduced [NADPH--hemoprotein reductase] + 2 O2 = (E)-phenylacetaldehyde oxime + 2 oxidized [NADPH--hemoprotein reductase] + CO2 + 3 H2O + 2 H(+). Its function is as follows. Involved in L-phenylalanine-derived cyanogenic glycoside biosynthesis, including prunasin and amygdalin defensive agents. Catalyzes the conversion of L-phenylalanine (Phe) into phenylacetaldoxime (PAOx). Cannot use tyrosine (Tyr), tryptophan (Trp) and valine (Val) as substrates. This chain is Phenylalanine N-monooxygenase CYP79D16, found in Prunus mume (Japanese apricot).